A 350-amino-acid chain; its full sequence is tRNA uridine(34) hydroxylase (350 aa).

Positions 146–240 (DDPDAVFIDM…YARRAREQGL (95 aa)) constitute a Rhodanese domain. C200 acts as the Cysteine persulfide intermediate in catalysis. The span at 319–328 (RRRRAGRENG) shows a compositional bias: basic and acidic residues. The disordered stretch occupies residues 319–350 (RRRRAGRENGNKIFNKSRGRLNSKLSIPDPAE).

It belongs to the TrhO family.

The enzyme catalyses uridine(34) in tRNA + AH2 + O2 = 5-hydroxyuridine(34) in tRNA + A + H2O. Functionally, catalyzes oxygen-dependent 5-hydroxyuridine (ho5U) modification at position 34 in tRNAs. This Salmonella schwarzengrund (strain CVM19633) protein is tRNA uridine(34) hydroxylase.